Reading from the N-terminus, the 85-residue chain is ATP synthase subunit c (85 aa).

2 helical membrane passes run 19-39 (LGAA…IGKI) and 62-82 (IIAA…CLLV).

It belongs to the ATPase C chain family. F-type ATPases have 2 components, F(1) - the catalytic core - and F(0) - the membrane proton channel. F(1) has five subunits: alpha(3), beta(3), gamma(1), delta(1), epsilon(1). F(0) has three main subunits: a(1), b(2) and c(10-14). The alpha and beta chains form an alternating ring which encloses part of the gamma chain. F(1) is attached to F(0) by a central stalk formed by the gamma and epsilon chains, while a peripheral stalk is formed by the delta and b chains.

Its subcellular location is the cell inner membrane. Functionally, f(1)F(0) ATP synthase produces ATP from ADP in the presence of a proton or sodium gradient. F-type ATPases consist of two structural domains, F(1) containing the extramembraneous catalytic core and F(0) containing the membrane proton channel, linked together by a central stalk and a peripheral stalk. During catalysis, ATP synthesis in the catalytic domain of F(1) is coupled via a rotary mechanism of the central stalk subunits to proton translocation. Its function is as follows. Key component of the F(0) channel; it plays a direct role in translocation across the membrane. A homomeric c-ring of between 10-14 subunits forms the central stalk rotor element with the F(1) delta and epsilon subunits. In Bacteroides fragilis (strain ATCC 25285 / DSM 2151 / CCUG 4856 / JCM 11019 / LMG 10263 / NCTC 9343 / Onslow / VPI 2553 / EN-2), this protein is ATP synthase subunit c.